The following is a 132-amino-acid chain: Transthyretin-like protein 16 (132 aa).

The N-terminal stretch at 1–19 is a signal peptide; sequence MRSLVVCLLLAACALECTA. N-linked (GlcNAc...) asparagine glycosylation occurs at Asn23.

Belongs to the nematode transthyretin-like family.

It localises to the secreted. The polypeptide is Transthyretin-like protein 16 (ttr-16) (Caenorhabditis elegans).